The chain runs to 64 residues: Small ribosomal subunit protein eS17 (64 aa).

This sequence belongs to the eukaryotic ribosomal protein eS17 family.

The polypeptide is Small ribosomal subunit protein eS17 (Methanosarcina acetivorans (strain ATCC 35395 / DSM 2834 / JCM 12185 / C2A)).